The following is a 341-amino-acid chain: D-aspartate oxidase (341 aa).

The FAD site is built by Asp36, Lys37, Thr43, Ser44, Met50, Gly307, and Ile311. The short motif at 339-341 (SKL) is the Microbody targeting signal element.

This sequence belongs to the DAMOX/DASOX family. Homotetramer. Interacts with PEX5; the interaction is direct and required for localization of DDO to the peroxisome. The cofactor is FAD. As to expression, expressed in epithelial cells of the renal proximal tubules (not detected in the glomeruli or renal distal tubules), liver, right atrium of heart, lung, chief cells of the gastric mucosa, choroid plexus, pia mater, brain stem, midbrain, pons, medulla oblongata, hypothalamus, hippocampus, cerebral cortex, cerebellum, ependyma, olfactory bulb and the pituitary, pineal, thyroid and adrenal glands (at protein level).

The protein resides in the peroxisome matrix. It is found in the cytoplasm. The protein localises to the cytosol. The catalysed reaction is D-aspartate + O2 + H2O = oxaloacetate + H2O2 + NH4(+). It catalyses the reaction D-glutamate + O2 + H2O = H2O2 + 2-oxoglutarate + NH4(+). Its function is as follows. Selectively catalyzes the oxidative deamination of acidic amino acids. Suppresses the level of D-aspartate in the brain, an amino acid that can act as an agonist for glutamate receptors. Protects the organism from the toxicity of D-amino acids. May also function in the intestine. The chain is D-aspartate oxidase (DDO) from Sus scrofa (Pig).